The sequence spans 449 residues: Aspartate aminotransferase 3, chloroplastic (449 aa).

The N-terminal 43 residues, 1–43 (MKTTHFSSSSSSDRRIGALLRHLNSGSDSDNLSSLYASPTSGG), are a transit peptide targeting the chloroplast. Glycine 81, tryptophan 178, and asparagine 231 together coordinate L-aspartate. Lysine 295 carries the post-translational modification N6-(pyridoxal phosphate)lysine. Arginine 423 contacts L-aspartate.

This sequence belongs to the class-I pyridoxal-phosphate-dependent aminotransferase family. As to quaternary structure, homodimer. Requires pyridoxal 5'-phosphate as cofactor. As to expression, expressed in roots, cauline leaves, flowers, hypocotyl epidermis and root hair cells.

It is found in the plastid. Its subcellular location is the chloroplast. The catalysed reaction is L-aspartate + 2-oxoglutarate = oxaloacetate + L-glutamate. Amino acid aminotransferase important for the metabolism of amino acids and Krebs-cycle related organic acids. No activity with D-Asp or D-Ala as amino donors. In plants, it is involved in nitrogen metabolism and in aspects of carbon and energy metabolism. The chain is Aspartate aminotransferase 3, chloroplastic (ASP3) from Arabidopsis thaliana (Mouse-ear cress).